The sequence spans 326 residues: MEGRTLEEVQEEVFKRHGVLVPKKELEDLAKALEEAGLLLTEKVEARLKEEEEKLKRERPMRLAGLSYPEGEREARAFLEAFRASYPGEGEEARVLLMPHLEPSRVPEVYGAALAALEKTPPPERIYLVGVAHRPLKEKAAALPVPFQTPFGPALPDLPALQALDALLPFELFNTPLAFREEHSLELPLFFLKGRFPEARVLPLLVARRSPELGEALKVVLRDFPGLLVLAVDLSHVGPRFGDTPLTRTLAEEARRRDLGFLERLAEGEPEAALAFLGANPTRIDGVEVVASLLPLLRERKGKVLAHRLDLEAPTLSAVGAGTLVL.

This sequence belongs to the MEMO1 family.

The polypeptide is MEMO1 family protein TTHA0924 (Thermus thermophilus (strain ATCC 27634 / DSM 579 / HB8)).